Reading from the N-terminus, the 386-residue chain is Probable copper-dependent oxygenase M1 (386 aa).

The N-terminal stretch at 1-22 (MLRMKKICTAFLTIALCTHVLA) is a signal peptide. Asn86 carries N-linked (GlcNAc...) asparagine glycosylation. The chain crosses the membrane as a helical span at residues 334-354 (FVVPIAAIAFIALTIGAGYVF).

This sequence belongs to the clz3 oxygenase family.

The protein localises to the membrane. Its pathway is secondary metabolite biosynthesis. In terms of biological role, probable copper-dependent oxygenase; part of the gene cluster that mediates the biosynthesis of squalestatin S1 (SQS1, also known as zaragozic acid A), a heavily oxidized fungal polyketide that offers potent cholesterol lowering activity by targeting squalene synthase (SS). SQS1 is composed of a 2,8-dioxobicyclic[3.2.1]octane-3,4,5-tricarboxyclic acid core that is connected to two lipophilic polyketide arms. These initial steps feature the priming of an unusual benzoic acid starter unit onto the highly reducing polyketide synthase pks2, followed by oxaloacetate extension and product release to generate a tricarboxylic acid containing product. The phenylalanine ammonia lyase (PAL) M7 and the acyl-CoA ligase M9 are involved in transforming phenylalanine into benzoyl-CoA. The citrate synthase-like protein R3 is involved in connecting the C-alpha-carbons of the hexaketide chain and oxaloacetate to afford the tricarboxylic acid unit. The potential hydrolytic enzymes, M8 and M10, are in close proximity to pks2 and may participate in product release. On the other side, the tetraketide arm is synthesized by a the squalestatin tetraketide synthase pks1 and enzymatically esterified to the core in the last biosynthetic step, by the acetyltransferase M4. The biosynthesis of the tetraketide must involve 3 rounds of chain extension. After the first and second rounds methyl-transfer occurs, and in all rounds of extension the ketoreductase and dehydratase are active. The enoyl reductase and C-MeT of pks1 are not active in the final round of extension. The acetyltransferase M4 appears to have a broad substrate selectivity for its acyl CoA substrate, allowing the in vitro synthesis of novel squalestatins. The biosynthesis of SQS1 requires several oxidative steps likely performed by oxidoreductases M1, R1 and R2. Finally, in support of the identification of the cluster as being responsible for SQS1 production, the cluster contains a gene encoding a putative squalene synthase (SS) R6, suggesting a likely mechanism for self-resistance. The polypeptide is Probable copper-dependent oxygenase M1 (Phoma sp. (strain ATCC 20986 / MF5453)).